The chain runs to 277 residues: MPYIGCHLSSAKGYEAMGRVALSIGANTFQFFTRNPRGSKAKAIDEQDIARFLELARNNGFGTLLAHAPYTLNPCSADPSVARFAAQVLKEDLELMEHLPGNLYNFHPGCHVGQGVEKGIELVADQLNDVLSPEQKTIVLLETMSGKGSEVGRTFEELAAIMERVDLKDKLGVCLDTCHVYSAGYDIVNRLDSVLEHFDAVLGLERLRAIHLNDSMTPFSSFKDRHETIGKGSLGEQAFINIINHPVLRELPFFLETPRDDAGHGEEITWLKEHYRN.

9 residues coordinate Zn(2+): histidine 67, histidine 107, glutamate 142, aspartate 176, histidine 179, histidine 211, aspartate 224, histidine 226, and glutamate 256.

The protein belongs to the AP endonuclease 2 family. Zn(2+) is required as a cofactor.

The enzyme catalyses Endonucleolytic cleavage to 5'-phosphooligonucleotide end-products.. Its function is as follows. Endonuclease IV plays a role in DNA repair. It cleaves phosphodiester bonds at apurinic or apyrimidinic (AP) sites, generating a 3'-hydroxyl group and a 5'-terminal sugar phosphate. This chain is Probable endonuclease 4, found in Akkermansia muciniphila (strain ATCC BAA-835 / DSM 22959 / JCM 33894 / BCRC 81048 / CCUG 64013 / CIP 107961 / Muc).